Here is a 131-residue protein sequence, read N- to C-terminus: Ribosome-binding factor A (131 aa).

Belongs to the RbfA family. In terms of assembly, monomer. Binds 30S ribosomal subunits, but not 50S ribosomal subunits or 70S ribosomes.

The protein resides in the cytoplasm. In terms of biological role, one of several proteins that assist in the late maturation steps of the functional core of the 30S ribosomal subunit. Associates with free 30S ribosomal subunits (but not with 30S subunits that are part of 70S ribosomes or polysomes). Required for efficient processing of 16S rRNA. May interact with the 5'-terminal helix region of 16S rRNA. This chain is Ribosome-binding factor A, found in Thermotoga maritima (strain ATCC 43589 / DSM 3109 / JCM 10099 / NBRC 100826 / MSB8).